We begin with the raw amino-acid sequence, 377 residues long: Chaperone protein DnaJ (377 aa).

Residues 5–70 (DYYQILGIPK…EKRSAYDQYG (66 aa)) form the J domain. The CR-type zinc-finger motif lies at 132–210 (GIKKEIQIPT…CHGQGRVETY (79 aa)). Residues cysteine 145, cysteine 148, cysteine 162, cysteine 165, cysteine 184, cysteine 187, cysteine 198, and cysteine 201 each contribute to the Zn(2+) site. 4 CXXCXGXG motif repeats span residues 145-152 (CKTCYGSG), 162-169 (CSTCHGKG), 184-191 (CPTCHGKG), and 198-205 (CNLCHGQG).

It belongs to the DnaJ family. As to quaternary structure, homodimer. Zn(2+) serves as cofactor.

It localises to the cytoplasm. Its function is as follows. Participates actively in the response to hyperosmotic and heat shock by preventing the aggregation of stress-denatured proteins and by disaggregating proteins, also in an autonomous, DnaK-independent fashion. Unfolded proteins bind initially to DnaJ; upon interaction with the DnaJ-bound protein, DnaK hydrolyzes its bound ATP, resulting in the formation of a stable complex. GrpE releases ADP from DnaK; ATP binding to DnaK triggers the release of the substrate protein, thus completing the reaction cycle. Several rounds of ATP-dependent interactions between DnaJ, DnaK and GrpE are required for fully efficient folding. Also involved, together with DnaK and GrpE, in the DNA replication of plasmids through activation of initiation proteins. This chain is Chaperone protein DnaJ, found in Buchnera aphidicola subsp. Acyrthosiphon pisum (strain Tuc7).